Here is a 773-residue protein sequence, read N- to C-terminus: C-Maf-inducing protein (773 aa).

The interval 1 to 30 is disordered; that stretch reads MDVTSSSGGGGDPRQIEETKPLLGGDVSAP. The region spanning 54 to 163 is the PH domain; that stretch reads LLQEGDIQVC…HSLQWKKKIY (110 aa). A phosphoserine mark is found at Ser-349, Ser-377, Ser-382, and Ser-660. LRR repeat units follow at residues 663 to 686, 687 to 707, 712 to 732, and 736 to 756; these read NLEN…IKLP, SLKQ…RLLS, MLQV…LALS, and SLCS…EDLK.

In terms of assembly, interacts with FLNA. In terms of tissue distribution, isoform 1 is expressed in peripheral blood mononuclear cells and kidney. Lower expression in brain and liver. Expression is down-regulated in activated cells. Isoform 2 is expressed in lymphocyte precursors, however, expression shuts down during maturation and differentiation in thymus and fetal liver.

It localises to the nucleus. It is found in the cytoplasm. Plays a role in T-cell signaling pathway. Isoform 2 may play a role in T-helper 2 (Th2) signaling pathway and seems to represent the first proximal signaling protein that links T-cell receptor-mediated signal to the activation of c-Maf Th2 specific factor. In Homo sapiens (Human), this protein is C-Maf-inducing protein (CMIP).